A 513-amino-acid chain; its full sequence is Probable histone deacetylase 19 (513 aa).

The segment at 23-334 (RRVCYFYDPD…WCYETGVALG (312 aa)) is histone deacetylase. His-154 acts as the Proton donor/acceptor in catalysis. Asp-189, His-191, and Asp-277 together coordinate Zn(2+). 2 disordered regions span residues 384 to 432 (HAPS…ESSR) and 446 to 513 (ENAT…YHKP). The segment covering 398–409 (EIPEQDEDQDDP) has biased composition (acidic residues). A compositionally biased stretch (basic and acidic residues) spans 410-432 (DERHDPDSDMEVDDHKAVEESSR). A compositionally biased stretch (polar residues) spans 492–504 (NVKNEPESSTKLQ).

This sequence belongs to the histone deacetylase family. HD type 1 subfamily. Zn(2+) is required as a cofactor.

It localises to the nucleus. It catalyses the reaction N(6)-acetyl-L-lysyl-[histone] + H2O = L-lysyl-[histone] + acetate. In terms of biological role, responsible for the deacetylation of lysine residues on the N-terminal part of the core histones (H2A, H2B, H3 and H4). Histone deacetylation gives a tag for epigenetic repression and plays an important role in transcriptional regulation, cell cycle progression and developmental events. Histone deacetylases act via the formation of large multiprotein complexes. This chain is Probable histone deacetylase 19, found in Zea mays (Maize).